The chain runs to 161 residues: PTS system glucose-specific EIIA component (161 aa).

A PTS EIIA type-1 domain is found at 31–135 (DPVFSKKIVG…SILTPVVISN (105 aa)). Zn(2+) is bound by residues H68 and H83. H83 acts as the Tele-phosphohistidine intermediate; for EIIA activity in catalysis. The residue at position 83 (H83) is a Phosphohistidine; by HPr.

Zn(2+) serves as cofactor.

It is found in the cytoplasm. Its function is as follows. The phosphoenolpyruvate-dependent sugar phosphotransferase system (sugar PTS), a major carbohydrate active transport system, catalyzes the phosphorylation of incoming sugar substrates concomitantly with their translocation across the cell membrane. The enzyme II complex composed of PtsG and Crr is involved in glucose transport. The sequence is that of PTS system glucose-specific EIIA component (crr) from Buchnera aphidicola subsp. Acyrthosiphon pisum (strain APS) (Acyrthosiphon pisum symbiotic bacterium).